Reading from the N-terminus, the 379-residue chain is Tubby-like F-box protein 7 (379 aa).

Over residues 18 to 28 (FHQGETTTAPE) the composition is skewed to polar residues. Positions 18 to 41 (FHQGETTTAPESESIPPPSNMAGS) are disordered. The region spanning 42–97 (SSWSAMLPELLGEIIRRVEETEDRWPQRRDVVTCACVSKKWREITHDFARSSLNSG) is the F-box domain. 2 disordered regions span residues 193 to 212 (SQPPHNGAKPSNGKASRRFA) and 248 to 278 (TLRCPSPSPSSSSAGLSSDQKPCDVTKIMKK).

Belongs to the TUB family. In terms of tissue distribution, ubiquitous.

The sequence is that of Tubby-like F-box protein 7 from Arabidopsis thaliana (Mouse-ear cress).